A 692-amino-acid polypeptide reads, in one-letter code: Elongation factor G (692 aa).

The tr-type G domain occupies 8-282 (EKTRNIGIMA…GVVDYLPSPV (275 aa)). Residues 17–24 (AHIDAGKT), 81–85 (DTPGH), and 135–138 (NKMD) contribute to the GTP site.

This sequence belongs to the TRAFAC class translation factor GTPase superfamily. Classic translation factor GTPase family. EF-G/EF-2 subfamily.

It is found in the cytoplasm. In terms of biological role, catalyzes the GTP-dependent ribosomal translocation step during translation elongation. During this step, the ribosome changes from the pre-translocational (PRE) to the post-translocational (POST) state as the newly formed A-site-bound peptidyl-tRNA and P-site-bound deacylated tRNA move to the P and E sites, respectively. Catalyzes the coordinated movement of the two tRNA molecules, the mRNA and conformational changes in the ribosome. The polypeptide is Elongation factor G (Geobacillus kaustophilus (strain HTA426)).